The chain runs to 1560 residues: BRD4-interacting chromatin-remodeling complex-associated protein (1560 aa).

Disordered stretches follow at residues 53-99 (VQEA…GADQ), 624-688 (APQA…ATPT), 723-949 (IVSA…VTTP), 974-1028 (NKAG…TGLP), 1049-1075 (KAASSGPGKPSGLQYESKLSGLKKPPT), and 1215-1300 (SSEG…IKTY). The span at 86–96 (ATGGGGGGSGG) shows a compositional bias: gly residues. Residues 624–664 (APQAPPAVSTPLPLGLQQPQAQQPPQAPTPQAAAPPQATTP) are compositionally biased toward low complexity. A compositionally biased stretch (pro residues) spans 726–736 (APPPAQDPAPA). Positions 747-780 (PQAPDSQASPAPAPQIPAAAPLKGPGPSSSPSLP) are enriched in low complexity. 3 stretches are compositionally biased toward pro residues: residues 791–806 (LPSPHPTRPPSRPPSR), 814–831 (PSEPPLHPCPPPQAPPTL), and 843–880 (VPPPASNPAPTAPGPPQPPLRPQSQPPEGPLPPAPHLP). Residues 881 to 896 (PSSTSSAVASSSETSS) are compositionally biased toward low complexity. Residue Ser919 is modified to Phosphoserine. Residue Thr921 is modified to Phosphothreonine. The span at 932–941 (PAAPPPPPPR) shows a compositional bias: pro residues. A compositionally biased stretch (low complexity) spans 1005-1028 (APSGTPTAPSHAPAPAPMAATGLP). Lys1057 is subject to N6-acetyllysine. The span at 1227-1236 (LSSSAPGAST) shows a compositional bias: polar residues. Low complexity predominate over residues 1264–1281 (ASSSLSSSSSSSSAASSL). Residue Lys1313 forms a Glycyl lysine isopeptide (Lys-Gly) (interchain with G-Cter in SUMO2) linkage. Disordered stretches follow at residues 1324–1424 (NTAL…VDEA) and 1440–1560 (YQRM…TLTR). The segment covering 1331-1356 (HQPPPPPATLKVAEPPPRPPPPPPPT) has biased composition (pro residues). Residues 1401 to 1412 (PEGTPAGRARGG) are compositionally biased toward low complexity. Phosphoserine is present on Ser1413. The segment covering 1485-1515 (ASFSSDSPQDDTLTEHLQSAIDSILNLQQAP) has biased composition (polar residues).

In terms of assembly, component of the multiprotein chromatin-remodeling complexes SWI/SNF: SWI/SNF-A (BAF), SWI/SNF-B (PBAF) and related complexes. The canonical complex contains a catalytic subunit (either SMARCA4/BRG1/BAF190A or SMARCA2/BRM/BAF190B) and at least SMARCE1, ACTL6A/BAF53, SMARCC1/BAF155, SMARCC2/BAF170, and SMARCB1/SNF5/BAF47. Other subunits specific to each of the complexes may also be present permitting several possible combinations developmentally and tissue specific. Component of the SWI/SNF (GBAF) subcomplex, which includes at least BICRA or BICRAL (mutually exclusive), BRD9, SS18, the core BAF subunits, SMARCA2/BRM, SMARCA4/BRG1/BAF190A, ACTL6A/BAF53, SMARCC1/BAF155, and SMARCD1/BAF60A. Interacts with BRD4; the interaction bridges BRD4 to the GBAF complex. In terms of tissue distribution, expressed at moderate levels in heart, brain, placenta, skeletal muscle, and pancreas, and at lower levels in lung, liver and kidney.

Its subcellular location is the nucleus. Its function is as follows. Component of SWI/SNF chromatin remodeling subcomplex GBAF that carries out key enzymatic activities, changing chromatin structure by altering DNA-histone contacts within a nucleosome in an ATP-dependent manner. May play a role in BRD4-mediated gene transcription. This is BRD4-interacting chromatin-remodeling complex-associated protein from Homo sapiens (Human).